The chain runs to 29 residues: Cytochrome b6-f complex subunit 8 (29 aa).

Residues 3-23 (IISIGWVSLMVVFTFSISLVV) form a helical membrane-spanning segment.

This sequence belongs to the PetN family. The 4 large subunits of the cytochrome b6-f complex are cytochrome b6, subunit IV (17 kDa polypeptide, PetD), cytochrome f and the Rieske protein, while the 4 small subunits are PetG, PetL, PetM and PetN. The complex functions as a dimer.

The protein localises to the plastid. The protein resides in the chloroplast thylakoid membrane. Its function is as follows. Component of the cytochrome b6-f complex, which mediates electron transfer between photosystem II (PSII) and photosystem I (PSI), cyclic electron flow around PSI, and state transitions. In Staurastrum punctulatum (Green alga), this protein is Cytochrome b6-f complex subunit 8.